A 231-amino-acid chain; its full sequence is Movement and silencing protein TGBp1 (231 aa).

One can recognise a (+)RNA virus helicase ATP-binding domain in the interval 1–123; that stretch reads MDVFVKILSD…FKAVLSKRFG (123 aa). One can recognise a (+)RNA virus helicase C-terminal domain in the interval 124 to 231; that stretch reads SCTAQLLREL…MTPDASYTST (108 aa).

It belongs to the Tymovirales TGBp1 protein family. Homodimer and homooligomer. Interacts with capsid protein. Interacts with host AGO1; this interaction targets the host protein for degradation, thereby suppressing the antiviral RNA silencing.

It is found in the host cytoplasm. Transports viral genome to neighboring plant cells directly through plasmosdesmata, without any budding. The movement protein allows efficient cell to cell propagation, by bypassing the host cell wall barrier. Increases plasmodesma size exclusion limit. Acts as a suppressor of RNA-mediated gene silencing, also known as post-transcriptional gene silencing (PTGS), a mechanism of plant viral defense that limits the accumulation of viral RNAs. This Chrysanthemum morifolium (Florist's daisy) protein is Movement and silencing protein TGBp1.